A 310-amino-acid polypeptide reads, in one-letter code: L-lactate dehydrogenase (310 aa).

Residues Val-11, Asp-32, Tyr-62, and 76 to 77 (GV) each bind NAD(+). Residues Gln-79, Arg-85, and 117–120 (NPVD) each bind substrate. NAD(+) is bound by residues 115-117 (ASN) and Ser-140. Residue 145-148 (DTAR) participates in substrate binding. Residues Arg-150 and His-165 each coordinate beta-D-fructose 1,6-bisphosphate. Residue His-172 is the Proton acceptor of the active site. Residue Thr-227 coordinates substrate.

The protein belongs to the LDH/MDH superfamily. LDH family. In terms of assembly, homotetramer.

Its subcellular location is the cytoplasm. The enzyme catalyses (S)-lactate + NAD(+) = pyruvate + NADH + H(+). Its pathway is fermentation; pyruvate fermentation to lactate; (S)-lactate from pyruvate: step 1/1. Allosterically activated by fructose 1,6-bisphosphate (FBP). In terms of biological role, catalyzes the conversion of lactate to pyruvate. The chain is L-lactate dehydrogenase from Allorhizobium ampelinum (strain ATCC BAA-846 / DSM 112012 / S4) (Agrobacterium vitis (strain S4)).